Reading from the N-terminus, the 225-residue chain is PKHD-type hydroxylase Smal_0990 (225 aa).

The Fe2OG dioxygenase domain occupies 78–177; the sequence is KYLPPRFNRY…RVASFFWVQS (100 aa). Positions 96, 98, and 158 each coordinate Fe cation. R168 provides a ligand contact to 2-oxoglutarate.

The cofactor is Fe(2+). It depends on L-ascorbate as a cofactor.

The protein is PKHD-type hydroxylase Smal_0990 of Stenotrophomonas maltophilia (strain R551-3).